The following is a 648-amino-acid chain: Transketolase (648 aa).

H22 serves as a coordination point for substrate. Thiamine diphosphate is bound by residues H62 and 109-111 (GPL). Residue D150 coordinates Mg(2+). Positions 151 and 180 each coordinate thiamine diphosphate. 2 residues coordinate Mg(2+): N180 and V182. The substrate site is built by H252, R345, and S372. H252 serves as a coordination point for thiamine diphosphate. E397 acts as the Proton donor in catalysis. Position 423 (F423) interacts with thiamine diphosphate. H447, D455, and R506 together coordinate substrate.

This sequence belongs to the transketolase family. As to quaternary structure, homodimer. It depends on Mg(2+) as a cofactor. Ca(2+) serves as cofactor. Mn(2+) is required as a cofactor. The cofactor is Co(2+). Requires thiamine diphosphate as cofactor.

The enzyme catalyses D-sedoheptulose 7-phosphate + D-glyceraldehyde 3-phosphate = aldehydo-D-ribose 5-phosphate + D-xylulose 5-phosphate. Catalyzes the transfer of a two-carbon ketol group from a ketose donor to an aldose acceptor, via a covalent intermediate with the cofactor thiamine pyrophosphate. In Mycoplasma pneumoniae (strain ATCC 29342 / M129 / Subtype 1) (Mycoplasmoides pneumoniae), this protein is Transketolase (tkt).